The primary structure comprises 915 residues: Isoleucine--tRNA ligase (915 aa).

A 'HIGH' region motif is present at residues P64–H74. E557 provides a ligand contact to L-isoleucyl-5'-AMP. Positions A598–S602 match the 'KMSKS' region motif. K601 serves as a coordination point for ATP. Positions 887, 890, 902, and 905 each coordinate Zn(2+).

Belongs to the class-I aminoacyl-tRNA synthetase family. IleS type 1 subfamily. In terms of assembly, monomer. The cofactor is Zn(2+).

It localises to the cytoplasm. The enzyme catalyses tRNA(Ile) + L-isoleucine + ATP = L-isoleucyl-tRNA(Ile) + AMP + diphosphate. In terms of biological role, catalyzes the attachment of isoleucine to tRNA(Ile). As IleRS can inadvertently accommodate and process structurally similar amino acids such as valine, to avoid such errors it has two additional distinct tRNA(Ile)-dependent editing activities. One activity is designated as 'pretransfer' editing and involves the hydrolysis of activated Val-AMP. The other activity is designated 'posttransfer' editing and involves deacylation of mischarged Val-tRNA(Ile). The sequence is that of Isoleucine--tRNA ligase from Leptospira biflexa serovar Patoc (strain Patoc 1 / ATCC 23582 / Paris).